The following is an 892-amino-acid chain: Bifunctional uridylyltransferase/uridylyl-removing enzyme (892 aa).

Residues 1 to 348 (MPNFTGNTRP…LVDAKVHVRP (348 aa)) are uridylyltransferase. Residues 349–710 (INERFQARNG…RIHNQEPGTM (362 aa)) form a uridylyl-removing region. One can recognise an HD domain in the interval 467–589 (VDEHTLFLIH…VGDERRLNHL (123 aa)). 2 consecutive ACT domains span residues 711-786 (EVFI…LTQP) and 822-892 (VMEL…YLER).

The protein belongs to the GlnD family. Requires Mg(2+) as cofactor.

The catalysed reaction is [protein-PII]-L-tyrosine + UTP = [protein-PII]-uridylyl-L-tyrosine + diphosphate. The enzyme catalyses [protein-PII]-uridylyl-L-tyrosine + H2O = [protein-PII]-L-tyrosine + UMP + H(+). Its activity is regulated as follows. Uridylyltransferase (UTase) activity is inhibited by glutamine, while glutamine activates uridylyl-removing (UR) activity. Modifies, by uridylylation and deuridylylation, the PII regulatory proteins (GlnB and homologs), in response to the nitrogen status of the cell that GlnD senses through the glutamine level. Under low glutamine levels, catalyzes the conversion of the PII proteins and UTP to PII-UMP and PPi, while under higher glutamine levels, GlnD hydrolyzes PII-UMP to PII and UMP (deuridylylation). Thus, controls uridylylation state and activity of the PII proteins, and plays an important role in the regulation of nitrogen assimilation and metabolism. This is Bifunctional uridylyltransferase/uridylyl-removing enzyme from Nitrosococcus oceani (strain ATCC 19707 / BCRC 17464 / JCM 30415 / NCIMB 11848 / C-107).